A 584-amino-acid chain; its full sequence is MASINTESDDYHPIVILIDELKNEDIQLRLNSIKKLQSIAKALGPERTRTELIPYLQDSVLEDEDEVLVVLSEELGNLIEFVGGAEHAVCLLPPLQILAGAEELVVREKAVESLCKIAKEIPTSSFEESFLPLLFSLSKADWFTSRTSACGLFTVSYPRANAEMKKSLRKTFGGLCHDDTPMVKRAAATNLGSFAKQIEKESVKSEILPLFQSLSTDEQDSVRLLGVENCALLGSMLTNEENIQFILPTIKASSLDKSWRVRYMVARLLKELCESMGTEITKTELIGAFVKLLKDTEAEVRTEASLRIADVCSLLTKEMNIKTILPCVKDLVSDSSQHVRAALAQVIMSLAPIYGKEDTLTHLLELFLHLLKDDFPDVRLNIISKLDQVSKVIGIEMLSQSLLPAIVELAEDHQWRVRLAIIDYIPLLASQLGVEFFDEKLGNLCMTWLGDPVFSIREAATNNLKKLTEVFGVDWAKNNIIPKVLSLHSHPNYLYRMTTLFSISTLSTVVGGDVISSSMVPLLAKMVSDKVPNIRFNVAKTFQTIIPLLDSTIVQSRVKPLLVKLHEDTDKDVKFYASQALQLC.

14 HEAT repeats span residues 7–45 (ESDDYHPIVILIDELKNEDIQLRLNSIKKLQSIAKALGP), 46–84 (ERTRTELIPYLQDSVLEDEDEVLVVLSEELGNLIEFVGG), 86–123 (EHAVCLLPPLQILAGAEELVVREKAVESLCKIAKEIPT), 168–206 (LRKTFGGLCHDDTPMVKRAAATNLGSFAKQIEKESVKSE), 207–239 (ILPLFQSLSTDEQDSVRLLGVENCALLGSMLTN), 240–278 (EENIQFILPTIKASSLDKSWRVRYMVARLLKELCESMGT), 279–317 (EITKTELIGAFVKLLKDTEAEVRTEASLRIADVCSLLTK), 318–356 (EMNIKTILPCVKDLVSDSSQHVRAALAQVIMSLAPIYGK), 358–395 (DTLTHLLELFLHLLKDDFPDVRLNIISKLDQVSKVIGI), 397–434 (MLSQSLLPAIVELAEDHQWRVRLAIIDYIPLLASQLGV), 441–479 (LGNLCMTWLGDPVFSIREAATNNLKKLTEVFGVDWAKNN), 480–512 (IIPKVLSLHSHPNYLYRMTTLFSISTLSTVVGG), 513–551 (DVISSSMVPLLAKMVSDKVPNIRFNVAKTFQTIIPLLDS), and 553–584 (IVQSRVKPLLVKLHEDTDKDVKFYASQALQLC).

This sequence belongs to the phosphatase 2A regulatory subunit A family. As to quaternary structure, component of the Sca1 complex composed of at least gefA, gefH, scaA, phr, and the protein phosphatase 2A subunits pppA and pho2B.

The protein localises to the cytoplasm. It localises to the cytosol. The protein resides in the cell membrane. Its function is as follows. Scaffolding molecule which may coordinate the assembly of the catalytic subunit and a variable regulatory B subunit. Component of the Sca1 complex, a regulator of cell motility, chemotaxis and signal relay. The Sca1 complex is recruited to the plasma membrane in a chemoattractant- and F-actin-dependent manner and is enriched at the leading edge of chemotaxing cells where it regulates F-actin dynamics and signal relay by controlling the activation of rasC and the downstream target of rapamycin complex 2 (TORC2)-Akt/protein kinase B (PKB) pathway. This Dictyostelium discoideum (Social amoeba) protein is Protein phosphatase 2A scaffold subunit (pppA).